The following is a 252-amino-acid chain: 5-oxoprolinase subunit A 1 (252 aa).

This sequence belongs to the LamB/PxpA family. Forms a complex composed of PxpA, PxpB and PxpC.

The enzyme catalyses 5-oxo-L-proline + ATP + 2 H2O = L-glutamate + ADP + phosphate + H(+). Catalyzes the cleavage of 5-oxoproline to form L-glutamate coupled to the hydrolysis of ATP to ADP and inorganic phosphate. This Pseudomonas putida (strain ATCC 47054 / DSM 6125 / CFBP 8728 / NCIMB 11950 / KT2440) protein is 5-oxoprolinase subunit A 1.